Here is a 212-residue protein sequence, read N- to C-terminus: Protein Nef (212 aa).

Glycine 2 carries the N-myristoyl glycine; by host lipid modification. Position 6 is a phosphoserine; by host (serine 6). Positions glutamate 67–glutamate 71 are acidic; interacts with host PACS1 and PACS2; stabilizes the interaction of NEF/MHC-I with host AP1M1; necessary for MHC-I internalization. The segment at proline 75 to proline 84 is SH3-binding; interaction with Src family tyrosine kinases. A PxxP; stabilizes the interaction of NEF/MHC-I with host AP1M1; necessary for MHC-I internalization motif is present at residues proline 78–proline 81. The interval glutamate 114–tryptophan 130 is mediates dimerization, Nef-PTE1 interaction. Residues valine 154–valine 186 form a binding to ATP6V1H region. The short motif at leucine 170–leucine 171 is the Dileucine internalization motif; necessary for CD4 internalization element. A Diacidic; necessary for CD4 internalization motif is present at residues glutamate 180 to aspartate 181.

It belongs to the lentivirus primate group Nef protein family. Monomer; cytosolic form. Homodimer; membrane bound form. Interacts with Nef associated p21-activated kinase (PAK2); this interaction activates PAK2. Associates with the Nef-MHC-I-AP1 complex; this complex is required for MHC-I internalization. Interacts (via C-terminus) with host PI3-kinase. Interacts with host PACS1; this interaction seems to be weak. Interacts with host PACS2. Interacts with host LCK and MAPK3; these interactions inhibit the kinase activity of the latter. Interacts with host ATP6V1H; this interaction may play a role in CD4 endocytosis. Associates with the CD4-Nef-AP2 complex; this complex is required for CD4 internalization. Interacts with host AP2 subunit alpha and AP2 subunit sigma2. Interacts with TCR-zeta chain; this interaction up-regulates the Fas ligand (FasL) surface expression. Interacts with host HCK, LYN, and SRC; these interactions activate the Src family kinases. Interacts with MAP3K5; this interaction inhibits the Fas and TNFR-mediated death signals. Interacts with beta-COP and PTE1. Interacts with human RACK1; this increases Nef phosphorylation by PKC. Interacts with TP53; this interaction decreases the half-life of TP53, protecting the infected cell against p53-mediated apoptosis. Post-translationally, the virion-associated Nef proteins are cleaved by the viral protease to release the soluble C-terminal core protein. Nef is probably cleaved concomitantly with viral structural proteins on maturation of virus particles. In terms of processing, myristoylated. Phosphorylated on serine residues, probably by host PKCdelta and theta.

The protein resides in the host cell membrane. Its subcellular location is the virion. It localises to the secreted. The protein localises to the host Golgi apparatus membrane. Functionally, factor of infectivity and pathogenicity, required for optimal virus replication. Alters numerous pathways of T-lymphocyte function and down-regulates immunity surface molecules in order to evade host defense and increase viral infectivity. Alters the functionality of other immunity cells, like dendritic cells, monocytes/macrophages and NK cells. In terms of biological role, in infected CD4(+) T-lymphocytes, down-regulates the surface MHC-I, mature MHC-II, CD4, CD28, CCR5 and CXCR4 molecules. Mediates internalization and degradation of host CD4 through the interaction of with the cytoplasmic tail of CD4, the recruitment of AP-2 (clathrin adapter protein complex 2), internalization through clathrin coated pits, and subsequent transport to endosomes and lysosomes for degradation. Diverts host MHC-I molecules to the trans-Golgi network-associated endosomal compartments by an endocytic pathway to finally target them for degradation. MHC-I down-regulation may involve AP-1 (clathrin adapter protein complex 1) or possibly Src family kinase-ZAP70/Syk-PI3K cascade recruited by PACS2. In consequence infected cells are masked for immune recognition by cytotoxic T-lymphocytes. Decreasing the number of immune receptors also prevents reinfection by more HIV particles (superinfection). Down-regulates host SERINC3 and SERINC5 thereby excluding these proteins from the viral particles. Virion infectivity is drastically higher when SERINC3 or SERINC5 are excluded from the viral envelope, because these host antiviral proteins impair the membrane fusion event necessary for subsequent virion penetration. Bypasses host T-cell signaling by inducing a transcriptional program nearly identical to that of anti-CD3 cell activation. Interaction with TCR-zeta chain up-regulates the Fas ligand (FasL). Increasing surface FasL molecules and decreasing surface MHC-I molecules on infected CD4(+) cells send attacking cytotoxic CD8+ T-lymphocytes into apoptosis. Its function is as follows. Plays a role in optimizing the host cell environment for viral replication without causing cell death by apoptosis. Protects the infected cells from apoptosis in order to keep them alive until the next virus generation is ready to strike. Inhibits the Fas and TNFR-mediated death signals by blocking MAP3K5/ASK1. Decreases the half-life of TP53, protecting the infected cell against p53-mediated apoptosis. Inhibits the apoptotic signals regulated by the Bcl-2 family proteins through the formation of a Nef/PI3-kinase/PAK2 complex that leads to activation of PAK2 and induces phosphorylation of host BAD. Functionally, extracellular Nef protein targets CD4(+) T-lymphocytes for apoptosis by interacting with CXCR4 surface receptors. The chain is Protein Nef from Homo sapiens (Human).